The sequence spans 388 residues: S-adenosylmethionine synthase (388 aa).

His16 contacts ATP. Asp18 contributes to the Mg(2+) binding site. Glu44 lines the K(+) pocket. Glu57 and Gln100 together coordinate L-methionine. Residues 100–110 are flexible loop; that stretch reads QSPEIAQGVDR. ATP is bound by residues 165 to 167, 231 to 232, Asp240, 246 to 247, Ala263, and Lys267; these read DAK, KF, and RK. An L-methionine-binding site is contributed by Asp240. L-methionine is bound at residue Lys271.

It belongs to the AdoMet synthase family. As to quaternary structure, homotetramer; dimer of dimers. Requires Mg(2+) as cofactor. K(+) is required as a cofactor.

The protein resides in the cytoplasm. It catalyses the reaction L-methionine + ATP + H2O = S-adenosyl-L-methionine + phosphate + diphosphate. It functions in the pathway amino-acid biosynthesis; S-adenosyl-L-methionine biosynthesis; S-adenosyl-L-methionine from L-methionine: step 1/1. In terms of biological role, catalyzes the formation of S-adenosylmethionine (AdoMet) from methionine and ATP. The overall synthetic reaction is composed of two sequential steps, AdoMet formation and the subsequent tripolyphosphate hydrolysis which occurs prior to release of AdoMet from the enzyme. In Psychrobacter sp. (strain PRwf-1), this protein is S-adenosylmethionine synthase.